A 658-amino-acid polypeptide reads, in one-letter code: Threonine--tRNA ligase (658 aa).

Residues 1 to 61 enclose the TGS domain; that stretch reads MSDVRVTVQR…AAGDVVEPIT (61 aa). The tract at residues 259-554 is catalytic; sequence DHRRLGAELD…LLEHYAGALP (296 aa). Residues Cys353, His404, and His531 each contribute to the Zn(2+) site.

This sequence belongs to the class-II aminoacyl-tRNA synthetase family. Homodimer. Zn(2+) is required as a cofactor.

It localises to the cytoplasm. It carries out the reaction tRNA(Thr) + L-threonine + ATP = L-threonyl-tRNA(Thr) + AMP + diphosphate + H(+). Catalyzes the attachment of threonine to tRNA(Thr) in a two-step reaction: L-threonine is first activated by ATP to form Thr-AMP and then transferred to the acceptor end of tRNA(Thr). Also edits incorrectly charged L-seryl-tRNA(Thr). The chain is Threonine--tRNA ligase from Parafrankia sp. (strain EAN1pec).